A 1067-amino-acid chain; its full sequence is Cadmium/zinc-transporting ATPase HMA2 (1067 aa).

The HMA domain maps to 9–75 (QKSYFDVLGI…ALNQARLEAS (67 aa)). 8 consecutive transmembrane segments (helical) span residues 94 to 114 (YVLLCGLLLVVSLFEHFWHPL), 117 to 137 (FALVAAAAGLPPIVLRSIAAI), 140 to 160 (LTLDVNILMLIAVAGAIALKD), 162 to 182 (SEAGFIVFLFTTAEWLETRAS), 313 to 333 (YTPAVVVMAGSVAAIPAIAKA), 342 to 362 (LALVLLVSACPCALVLSTPIA), 649 to 669 (IIVNIIFSVITKLAIVGLAFA), and 673 to 693 (LIWAAVLADVGTCLLVIMYSM). 3 disordered regions span residues 711-739 (HHGSPKKCCSSSHHGSHAKKNHGVSHHCS), 760-790 (HDHHHEHNHHEEPAHKHSSNQHGCHDHSHGH), and 960-996 (NDTHPVQEHSISIEESSDHHEHHHNEEHKAEDCGHHP). Residues 724 to 735 (HGSHAKKNHGVS) show a composition bias toward basic residues. Composition is skewed to basic and acidic residues over residues 760 to 774 (HDHHHEHNHHEEPAH) and 975 to 996 (SSDHHEHHHNEEHKAEDCGHHP).

Belongs to the cation transport ATPase (P-type) (TC 3.A.3) family. Type IB subfamily. As to expression, in roots, localizes at the pericycle cells. In nodes, localizes in the phloem parenchyma and companion cells of both enlarged and diffuse vascular bundles.

It localises to the cell membrane. It carries out the reaction Zn(2+)(in) + ATP + H2O = Zn(2+)(out) + ADP + phosphate + H(+). The catalysed reaction is Cd(2+)(in) + ATP + H2O = Cd(2+)(out) + ADP + phosphate + H(+). In terms of biological role, zinc/cadmium transporter that plays an essential role in promoting translocation of zinc and cadmium from roots to shoots. May control cadmium loading into xylem. In roots, transports zinc and cadmium from the apoplast to the symplast to facilitate translocation via the phloem. In nodes, functions to load zinc and cadmium to the phloem for the preferential distribution to the upper nodes and panicles. The polypeptide is Cadmium/zinc-transporting ATPase HMA2 (Oryza sativa subsp. japonica (Rice)).